The sequence spans 489 residues: Betaine aldehyde dehydrogenase (489 aa).

Positions 26 and 93 each coordinate K(+). 150–152 (GAW) serves as a coordination point for NAD(+). Catalysis depends on K162, which acts as the Charge relay system. 176-179 (KPSE) is an NAD(+) binding site. V180 lines the K(+) pocket. 229 to 232 (GVET) is a binding site for NAD(+). L245 serves as a coordination point for K(+). E251 serves as the catalytic Proton acceptor. Residues G253, C285, and E386 each coordinate NAD(+). The Nucleophile role is filled by C285. C285 carries the post-translational modification Cysteine sulfenic acid (-SOH). K(+) is bound by residues K456 and G459. E463 acts as the Charge relay system in catalysis.

It belongs to the aldehyde dehydrogenase family. In terms of assembly, dimer of dimers. It depends on K(+) as a cofactor.

It catalyses the reaction betaine aldehyde + NAD(+) + H2O = glycine betaine + NADH + 2 H(+). It participates in amine and polyamine biosynthesis; betaine biosynthesis via choline pathway; betaine from betaine aldehyde: step 1/1. Functionally, involved in the biosynthesis of the osmoprotectant glycine betaine. Catalyzes the irreversible oxidation of betaine aldehyde to the corresponding acid. In Burkholderia mallei (strain SAVP1), this protein is Betaine aldehyde dehydrogenase.